The primary structure comprises 517 residues: NAD(P)H-quinone oxidoreductase subunit 2 (517 aa).

14 helical membrane-spanning segments follow: residues 16–36 (ILPE…DLIF), 43–63 (WLPY…YLAW), 80–100 (LSIV…LMSI), 110–130 (LAEF…LCGA), 133–153 (LVMI…MTGY), 168–188 (LLIG…LYGL), 211–231 (LGLA…ISAV), 245–265 (PTPV…ALAI), 279–299 (WHFV…VVAL), 307–327 (MLAY…VAGT), 335–355 (VFYL…IILF), 379–399 (LALS…GFFG), 401–421 (IYLF…LGLV), and 467–487 (VGIV…NPLF).

This sequence belongs to the complex I subunit 2 family. In terms of assembly, NDH-1 can be composed of about 15 different subunits; different subcomplexes with different compositions have been identified which probably have different functions.

It localises to the cellular thylakoid membrane. It carries out the reaction a plastoquinone + NADH + (n+1) H(+)(in) = a plastoquinol + NAD(+) + n H(+)(out). The enzyme catalyses a plastoquinone + NADPH + (n+1) H(+)(in) = a plastoquinol + NADP(+) + n H(+)(out). Its function is as follows. NDH-1 shuttles electrons from an unknown electron donor, via FMN and iron-sulfur (Fe-S) centers, to quinones in the respiratory and/or the photosynthetic chain. The immediate electron acceptor for the enzyme in this species is believed to be plastoquinone. Couples the redox reaction to proton translocation, and thus conserves the redox energy in a proton gradient. Cyanobacterial NDH-1 also plays a role in inorganic carbon-concentration. The chain is NAD(P)H-quinone oxidoreductase subunit 2 from Rippkaea orientalis (strain PCC 8801 / RF-1) (Cyanothece sp. (strain PCC 8801)).